Here is a 185-residue protein sequence, read N- to C-terminus: uncharacterized protein (185 aa).

An N-acetylmethionine modification is found at methionine 1. Basic and acidic residues-rich tracts occupy residues 1–18, 26–47, and 59–71; these read MDAF…QDKQ, TPSD…TTEE, and SNED…PVLE. Disordered stretches follow at residues 1 to 71 and 155 to 185; these read MDAF…PVLE and DHDR…DGLL. The segment covering 170–185 has biased composition (acidic residues); sequence LPEELETDQDFLDGLL.

This is an uncharacterized protein from Saccharomyces cerevisiae (strain ATCC 204508 / S288c) (Baker's yeast).